The following is a 226-amino-acid chain: 2-C-methyl-D-erythritol 4-phosphate cytidylyltransferase (226 aa).

It belongs to the IspD/TarI cytidylyltransferase family. IspD subfamily.

The enzyme catalyses 2-C-methyl-D-erythritol 4-phosphate + CTP + H(+) = 4-CDP-2-C-methyl-D-erythritol + diphosphate. The protein operates within isoprenoid biosynthesis; isopentenyl diphosphate biosynthesis via DXP pathway; isopentenyl diphosphate from 1-deoxy-D-xylulose 5-phosphate: step 2/6. Catalyzes the formation of 4-diphosphocytidyl-2-C-methyl-D-erythritol from CTP and 2-C-methyl-D-erythritol 4-phosphate (MEP). The sequence is that of 2-C-methyl-D-erythritol 4-phosphate cytidylyltransferase from Haemophilus ducreyi (strain 35000HP / ATCC 700724).